Reading from the N-terminus, the 375-residue chain is Pectate lyase C (375 aa).

The N-terminal stretch at 1–22 (MKSLITPITAGLLLALSQPLLA) is a signal peptide. A disulfide bridge links Cys-94 with Cys-177. Ca(2+)-binding residues include Asp-151, Asp-153, Glu-188, and Asp-192. Arg-240 is a catalytic residue. A disulfide bridge links Cys-351 with Cys-374.

It belongs to the polysaccharide lyase 1 family. PLADES subfamily. Requires Ca(2+) as cofactor.

The protein localises to the secreted. It catalyses the reaction Eliminative cleavage of (1-&gt;4)-alpha-D-galacturonan to give oligosaccharides with 4-deoxy-alpha-D-galact-4-enuronosyl groups at their non-reducing ends.. Its pathway is glycan metabolism; pectin degradation; 2-dehydro-3-deoxy-D-gluconate from pectin: step 2/5. In terms of biological role, involved in maceration and soft-rotting of plant tissue. This Dickeya chrysanthemi (Pectobacterium chrysanthemi) protein is Pectate lyase C.